Consider the following 463-residue polypeptide: ATP-dependent protease ATPase subunit HslU (463 aa).

Residues I19, 61-66 (GVGKTE), D277, E341, and R413 contribute to the ATP site.

Belongs to the ClpX chaperone family. HslU subfamily. A double ring-shaped homohexamer of HslV is capped on each side by a ring-shaped HslU homohexamer. The assembly of the HslU/HslV complex is dependent on binding of ATP.

The protein resides in the cytoplasm. In terms of biological role, ATPase subunit of a proteasome-like degradation complex; this subunit has chaperone activity. The binding of ATP and its subsequent hydrolysis by HslU are essential for unfolding of protein substrates subsequently hydrolyzed by HslV. HslU recognizes the N-terminal part of its protein substrates and unfolds these before they are guided to HslV for hydrolysis. This is ATP-dependent protease ATPase subunit HslU from Bacillus cereus (strain ATCC 14579 / DSM 31 / CCUG 7414 / JCM 2152 / NBRC 15305 / NCIMB 9373 / NCTC 2599 / NRRL B-3711).